The sequence spans 276 residues: Omega-amidase NIT2 (276 aa).

Residues 4-248 (FRLALIQLQV…ETILYSDIDL (245 aa)) form the CN hydrolase domain. A Phosphoserine modification is found at S26. The active-site Proton acceptor is E43. K68 bears the N6-acetyllysine; alternate mark. N6-succinyllysine; alternate is present on K68. The active-site Proton donor is the K112. N6-succinyllysine occurs at positions 123 and 130. C153 serves as the catalytic Nucleophile.

Belongs to the carbon-nitrogen hydrolase superfamily. NIT1/NIT2 family. Homodimer.

The protein localises to the cytoplasm. It carries out the reaction a monoamide of a dicarboxylate + H2O = a dicarboxylate + NH4(+). The catalysed reaction is 2-oxoglutaramate + H2O = 2-oxoglutarate + NH4(+). It catalyses the reaction 2-oxosuccinamate + H2O = oxaloacetate + NH4(+). Its function is as follows. Has omega-amidase activity. The role of omega-amidase is to remove potentially toxic intermediates by converting 2-oxoglutaramate and 2-oxosuccinamate to biologically useful 2-oxoglutarate and oxaloacetate, respectively. Can also hydrolyze gamma-monomethyl-alpha-ketoglutarate in vitro. The chain is Omega-amidase NIT2 from Mus musculus (Mouse).